A 252-amino-acid polypeptide reads, in one-letter code: 4-hydroxy-tetrahydrodipicolinate reductase (252 aa).

8 to 13 provides a ligand contact to NAD(+); sequence GALGRM. Residue Arg36 coordinates NADP(+). NAD(+)-binding positions include 89 to 91 and 114 to 117; these read GTT and SSNF. Residue His146 is the Proton donor/acceptor of the active site. His147 is a (S)-2,3,4,5-tetrahydrodipicolinate binding site. Lys150 acts as the Proton donor in catalysis. 156–157 is a (S)-2,3,4,5-tetrahydrodipicolinate binding site; it reads GT.

Belongs to the DapB family.

The protein localises to the cytoplasm. It carries out the reaction (S)-2,3,4,5-tetrahydrodipicolinate + NAD(+) + H2O = (2S,4S)-4-hydroxy-2,3,4,5-tetrahydrodipicolinate + NADH + H(+). The enzyme catalyses (S)-2,3,4,5-tetrahydrodipicolinate + NADP(+) + H2O = (2S,4S)-4-hydroxy-2,3,4,5-tetrahydrodipicolinate + NADPH + H(+). Its pathway is amino-acid biosynthesis; L-lysine biosynthesis via DAP pathway; (S)-tetrahydrodipicolinate from L-aspartate: step 4/4. In terms of biological role, catalyzes the conversion of 4-hydroxy-tetrahydrodipicolinate (HTPA) to tetrahydrodipicolinate. In Methanoculleus marisnigri (strain ATCC 35101 / DSM 1498 / JR1), this protein is 4-hydroxy-tetrahydrodipicolinate reductase.